A 338-amino-acid polypeptide reads, in one-letter code: UPF0324 membrane protein NMA0465 (338 aa).

A run of 10 helical transmembrane segments spans residues 5–23, 33–55, 62–84, 94–116, 123–145, 155–177, 222–239, 254–273, 280–302, and 312–334; these read PFYF…ANYL, HISA…YPQF, GVLF…RLTF, AVVT…GIRY, LVYL…AESV, VAIA…FYTW, IRVM…WLLT, IPWF…FDLL, LFVE…TTHA, and PFVL…NYGI.

Belongs to the UPF0324 family.

Its subcellular location is the cell membrane. The polypeptide is UPF0324 membrane protein NMA0465 (Neisseria meningitidis serogroup A / serotype 4A (strain DSM 15465 / Z2491)).